Here is a 217-residue protein sequence, read N- to C-terminus: Large ribosomal subunit protein bL25 (217 aa).

Residues 187 to 217 (STPSGLEVEEETGEEESAEPEVIEKGKKEEE) are disordered. Residues 193-207 (EVEEETGEEESAEPE) are compositionally biased toward acidic residues. Residues 208-217 (VIEKGKKEEE) show a composition bias toward basic and acidic residues.

This sequence belongs to the bacterial ribosomal protein bL25 family. CTC subfamily. Part of the 50S ribosomal subunit; part of the 5S rRNA/L5/L18/L25 subcomplex. Contacts the 5S rRNA. Binds to the 5S rRNA independently of L5 and L18.

Functionally, this is one of the proteins that binds to the 5S RNA in the ribosome where it forms part of the central protuberance. The protein is Large ribosomal subunit protein bL25 of Thermosipho africanus (strain TCF52B).